We begin with the raw amino-acid sequence, 376 residues long: Growth/differentiation factor 8 (376 aa).

Positions 1-24 (MMQKLQMYVYIYLFMLIAAGPVDL) are cleaved as a signal peptide. The propeptide occupies 25–267 (NEGSEREENV…VTDTPKRSRR (243 aa)). Asn-72 is a glycosylation site (N-linked (GlcNAc...) asparagine). Cystine bridges form between Cys-273–Cys-283, Cys-282–Cys-341, Cys-310–Cys-373, and Cys-314–Cys-375.

It belongs to the TGF-beta family. Homodimer; disulfide-linked. Interacts with WFIKKN2, leading to inhibit its activity. Interacts with FSTL3. Synthesized as large precursor molecule that undergoes proteolytic cleavage to generate an N-terminal propeptide and a disulfide linked C-terminal dimer, which is the biologically active molecule. The circulating form consists of a latent complex of the C-terminal dimer and other proteins, including its propeptide, which maintain the C-terminal dimer in a latent, inactive state. Ligand activation requires additional cleavage of the prodomain by a tolloid-like metalloproteinase. As to expression, expressed specifically in developing and adult skeletal muscle. Weak expression in adipose tissue.

The protein resides in the secreted. Acts specifically as a negative regulator of skeletal muscle growth. The protein is Growth/differentiation factor 8 (Mstn) of Mus musculus (Mouse).